We begin with the raw amino-acid sequence, 205 residues long: Large ribosomal subunit protein bL21 (205 aa).

Residues 107-137 (APAKKAAAKKEEAPKADTAPKAAAAPTEEAA) form a disordered region. Positions 122–137 (ADTAPKAAAAPTEEAA) are enriched in low complexity.

The protein belongs to the bacterial ribosomal protein bL21 family. In terms of assembly, part of the 50S ribosomal subunit. Contacts protein L20.

In terms of biological role, this protein binds to 23S rRNA in the presence of protein L20. The chain is Large ribosomal subunit protein bL21 from Hyphomonas neptunium (strain ATCC 15444).